The primary structure comprises 2621 residues: Nonribosomal peptide synthetase dtpA (2621 aa).

The interval 446 to 844 is adenylation 1; sequence CMEQPNAEAI…GRKDQQVKIR (399 aa). Positions 978-1054 constitute a Carrier 1 domain; sequence QPYTQVEETL…EVALYSRALS (77 aa). Ser-1015 bears the O-(pantetheine 4'-phosphoryl)serine mark. A condensation 1 region spans residues 1095–1506; that stretch reads EDIYPCTALQ…LNQLELAGPQ (412 aa). Positions 1534–1930 are adenylation 2; it reads SRTQPGASAI…GRRDNQVKLR (397 aa). In terms of domain architecture, Carrier 2 spans 2071–2147; that stretch reads QPSTTQEALV…LFCTNASTSI (77 aa). O-(pantetheine 4'-phosphoryl)serine is present on Ser-2108. Residues 2220–2618 form a condensation 2 region; sequence AIFKLHGSKV…HSARPIASID (399 aa).

Belongs to the NRP synthetase family.

The protein operates within alkaloid biosynthesis. Functionally, nonribosomal peptide synthetase; part of the gene cluster that mediates the biosynthesis of the dimeric diketopiperazine alkaloid ditryptophenaline. The nonribosomal peptide synthase dtpA accepts L-tryptophan and L-phenylalanine as its substrates and forms the phenylalanyl-tryptophanyl cyclic dipeptide product cyclophenylalanyltryptophenyl. The N-methyltransferase dtpB is responsible for the N-methylation of cyclophenylalanyltryptophenyl to yield cyclo-N-methylphenylalanyltryptophenyl. The cytochrome P450 monooxygenase is responsible not only for pyrroloindole ring formation but also for concurrent dimerization of N-methylphenylalanyltryptophanyl diketopiperazine monomers into a homodimeric product. This is Nonribosomal peptide synthetase dtpA from Aspergillus flavus (strain ATCC 200026 / FGSC A1120 / IAM 13836 / NRRL 3357 / JCM 12722 / SRRC 167).